Here is a 261-residue protein sequence, read N- to C-terminus: 2-phytyl-1,4-beta-naphthoquinone methyltransferase, chloroplastic (261 aa).

The N-terminal 30 residues, 1–30 (MAALLGIVSPVTFTGKHPVNSRSRRRTVVK), are a transit peptide targeting the chloroplast.

It belongs to the class I-like SAM-binding methyltransferase superfamily. MenG/UbiE family.

Its subcellular location is the plastid. It is found in the chloroplast. It carries out the reaction demethylphylloquinol + S-adenosyl-L-methionine = phylloquinol + S-adenosyl-L-homocysteine + H(+). In terms of biological role, involved in the biosynthesis of phylloquinone (vitamin K1). Methyltransferase required for the conversion of 2-phytyl-1,4-beta-naphthoquinol to phylloquinol. The protein is 2-phytyl-1,4-beta-naphthoquinone methyltransferase, chloroplastic of Arabidopsis thaliana (Mouse-ear cress).